Here is a 132-residue protein sequence, read N- to C-terminus: Two-component response regulator ORR42 (132 aa).

Positions Arg-11–Ser-125 constitute a Response regulatory domain. At Asp-61 the chain carries 4-aspartylphosphate.

This sequence belongs to the ARR family. Type-C subfamily. Post-translationally, two-component system major event consists of a His-to-Asp phosphorelay between a sensor histidine kinase (HK) and a response regulator (RR). In plants, the His-to-Asp phosphorelay involves an additional intermediate named Histidine-containing phosphotransfer protein (HPt). This multistep phosphorelay consists of a His-Asp-His-Asp sequential transfer of a phosphate group between first a His and an Asp of the HK protein, followed by the transfer to a conserved His of the HPt protein and finally the transfer to an Asp in the receiver domain of the RR protein.

Functionally, functions as a response regulator involved in His-to-Asp phosphorelay signal transduction system. Phosphorylation of the Asp residue in the receiver domain activates the ability of the protein to promote the transcription of target genes. May directly activate some type-A response regulators in response to cytokinins. This chain is Two-component response regulator ORR42, found in Oryza sativa subsp. japonica (Rice).